Here is a 702-residue protein sequence, read N- to C-terminus: Elongation factor G 2 (702 aa).

Residues 8 to 291 enclose the tr-type G domain; that stretch reads ELYRNIGIVA…AVIDYLPAPS (284 aa). Residues 17–24, 89–93, and 143–146 contribute to the GTP site; these read AHVDAGKT, DTPGH, and NKMD. Residues 293–314 are disordered; the sequence is IPAIRGTDPDDEEKHDERHADD.

The protein belongs to the TRAFAC class translation factor GTPase superfamily. Classic translation factor GTPase family. EF-G/EF-2 subfamily.

The protein resides in the cytoplasm. Functionally, catalyzes the GTP-dependent ribosomal translocation step during translation elongation. During this step, the ribosome changes from the pre-translocational (PRE) to the post-translocational (POST) state as the newly formed A-site-bound peptidyl-tRNA and P-site-bound deacylated tRNA move to the P and E sites, respectively. Catalyzes the coordinated movement of the two tRNA molecules, the mRNA and conformational changes in the ribosome. The chain is Elongation factor G 2 (fusB) from Pseudomonas aeruginosa (strain ATCC 15692 / DSM 22644 / CIP 104116 / JCM 14847 / LMG 12228 / 1C / PRS 101 / PAO1).